The sequence spans 349 residues: KH domain-containing, RNA-binding, signal transduction-associated protein 2 (349 aa).

The KH domain occupies 65–135; that stretch reads LIPVKQYPKF…HLSDELHVLI (71 aa). 2 disordered regions span residues 181–263 and 321–349; these read SEES…PPPA and EWAT…YGRY. Over residues 218 to 231 the composition is skewed to low complexity; sequence RGVLTPRGTTVTRG. Omega-N-methylarginine occurs at positions 230 and 240. Residues 340–349 are compositionally biased toward basic and acidic residues; that stretch reads GYREHPYGRY.

Belongs to the KHDRBS family. Self-associates to form homooligomers. Interacts with KHDRBS1/SAM68; heterooligomer formation of KHDRBS family proteins may modulate RNA substrate specificity. Interacts with RBMX, SAFB, SFRS9 and YTHDC1. Interacts with FYN and PLCG1 (via SH3 domain). Interacts (phosphorylated) with FYN, GRB2, PLCG1 and RASA1 (via SH2 domain). Methylated. In terms of processing, tyrosine phosphorylated by FYN, PTK6 and SRC. Tyrosine phosphorylated by SRC during mitosis. In terms of tissue distribution, expressed in heart, skin, brain, colon, spleen, kidney, cervix and testis. In adult cerebellum expressed predominantly in Purkinje cells and in the hippocampus is abundantly expressed in glutamatergic dentate granule cells and in specific inhibitory Schaffer collateral-associated and path-associated interneurons; expression is restricted to neuronal subpopulations largely non-overlapping with expression of KHDRBS3/SLM-2 (at protein level).

The protein resides in the nucleus. Its function is as follows. RNA-binding protein that plays a role in the regulation of alternative splicing and influences mRNA splice site selection and exon inclusion. Binds both poly(A) and poly(U) homopolymers. Phosphorylation by PTK6 inhibits its RNA-binding ability. Induces an increased concentration-dependent incorporation of exon in CD44 pre-mRNA by direct binding to purine-rich exonic enhancer. Can regulate alternative splicing of neurexins NRXN1-3 in the laminin G-like domain 6 containing the evolutionary conserved neurexin alternative spliced segment 4 (AS4) involved in neurexin selective targeting to postsynaptic partners. Regulates cell-type specific alternative splicing of NRXN1 at AS4 and acts synergystically with SAM68 in exon skipping. In contrast acts antagonistically with SAM68 in NRXN3 exon skipping at AS4. Its phosphorylation by FYN inhibits its ability to regulate splice site selection. May function as an adapter protein for Src kinases during mitosis. The protein is KH domain-containing, RNA-binding, signal transduction-associated protein 2 (Khdrbs2) of Mus musculus (Mouse).